Reading from the N-terminus, the 229-residue chain is Large ribosomal subunit protein uL1 (229 aa).

It belongs to the universal ribosomal protein uL1 family. As to quaternary structure, part of the 50S ribosomal subunit.

Its function is as follows. Binds directly to 23S rRNA. The L1 stalk is quite mobile in the ribosome, and is involved in E site tRNA release. Functionally, protein L1 is also a translational repressor protein, it controls the translation of the L11 operon by binding to its mRNA. This is Large ribosomal subunit protein uL1 from Chlorobium phaeobacteroides (strain DSM 266 / SMG 266 / 2430).